A 198-amino-acid polypeptide reads, in one-letter code: Probable GTP-binding protein EngB (198 aa).

In terms of domain architecture, EngB-type G spans 22-195 (DLPEIALAGR…WKAIHKFTKT (174 aa)). Residues 30–37 (GRSNVGKS), 57–61 (GKTQT), 75–78 (DVPG), 142–145 (TKAD), and 174–176 (FSS) contribute to the GTP site. Residues S37 and T59 each contribute to the Mg(2+) site.

This sequence belongs to the TRAFAC class TrmE-Era-EngA-EngB-Septin-like GTPase superfamily. EngB GTPase family. Mg(2+) is required as a cofactor.

In terms of biological role, necessary for normal cell division and for the maintenance of normal septation. In Bacillus anthracis (strain A0248), this protein is Probable GTP-binding protein EngB.